We begin with the raw amino-acid sequence, 290 residues long: Thymidylate synthase (290 aa).

R31 contacts dUMP. H61 is a binding site for (6R)-5,10-methylene-5,6,7,8-tetrahydrofolate. A dUMP-binding site is contributed by 152–153; it reads RR. C172 serves as the catalytic Nucleophile. DUMP contacts are provided by residues 192–195, N203, and 233–235; these read RSAD and HIY. (6R)-5,10-methylene-5,6,7,8-tetrahydrofolate is bound at residue D195. A289 contributes to the (6R)-5,10-methylene-5,6,7,8-tetrahydrofolate binding site.

This sequence belongs to the thymidylate synthase family. Bacterial-type ThyA subfamily. As to quaternary structure, homodimer.

It localises to the cytoplasm. The catalysed reaction is dUMP + (6R)-5,10-methylene-5,6,7,8-tetrahydrofolate = 7,8-dihydrofolate + dTMP. Its pathway is pyrimidine metabolism; dTTP biosynthesis. Functionally, catalyzes the reductive methylation of 2'-deoxyuridine-5'-monophosphate (dUMP) to 2'-deoxythymidine-5'-monophosphate (dTMP) while utilizing 5,10-methylenetetrahydrofolate (mTHF) as the methyl donor and reductant in the reaction, yielding dihydrofolate (DHF) as a by-product. This enzymatic reaction provides an intracellular de novo source of dTMP, an essential precursor for DNA biosynthesis. This is Thymidylate synthase from Psychrobacter cryohalolentis (strain ATCC BAA-1226 / DSM 17306 / VKM B-2378 / K5).